The sequence spans 477 residues: MMEKNTSEGPACSPEETASESAKVPTAEPPGEVAVSESTREEQVPKPQAPAPQAPTASTATKPAPPSEDVPSAPLLLTLDDVSSSSVTVSWEPPERLGRLGLQGYVLELCREGASEWVPVSARPMMVTQQTVRNLALGDKFLLRVSAVSSAGAGPPAMLDQPIHIRENIEAPKIRVPRHLRQTYIRQVGETVNLQIPFQGKPKPQATWTHNGHALDSQRVSMRTGDQDSILFIRSAQRSDSGRYELTVRVEDLEAKAVIDILVIEKPGPPSSIRLLDVWGCNAALQWTPPQDTGNTELLGYMVQKADKKTGQWFTVLERYHPTTCTISDLIIGNSYSFRVFSENLCGLSTSATVTKELAHIQKADIAAKPKGFIERDFSEAPSFTQPLADHTSTPGYSTQLFCSVRASPKPKIIWMKNKMEIQGNPKYRALSEQGVCTLEIRKPSPFDSGVYTCKAINVLGEASVDCRLEVKASAAH.

The disordered stretch occupies residues methionine 1–alanine 73. 2 positions are modified to phosphothreonine: threonine 6 and threonine 26. One can recognise a Fibronectin type-III 1 domain in the interval alanine 73–asparagine 168. In terms of domain architecture, Ig-like C2-type 1 spans proline 172–aspartate 260. The Fibronectin type-III 2 domain occupies proline 269 to alanine 364. The region spanning proline 382 to aspartate 466 is the Ig-like C2-type 2 domain.

Belongs to the immunoglobulin superfamily. MyBP family. In terms of tissue distribution, mainly expressed in the skeletal muscle. Slightly expressed in the left atrium and arteria mammaria interna.

Its function is as follows. Binds to myosin; probably involved in interaction with thick myofilaments in the A-band. The chain is Myosin-binding protein H (MYBPH) from Homo sapiens (Human).